Reading from the N-terminus, the 211-residue chain is FMN-dependent NADH:quinone oxidoreductase 2 (211 aa).

17–19 (SYS) serves as a coordination point for FMN.

It belongs to the azoreductase type 1 family. In terms of assembly, homodimer. Requires FMN as cofactor.

It carries out the reaction 2 a quinone + NADH + H(+) = 2 a 1,4-benzosemiquinone + NAD(+). The enzyme catalyses N,N-dimethyl-1,4-phenylenediamine + anthranilate + 2 NAD(+) = 2-(4-dimethylaminophenyl)diazenylbenzoate + 2 NADH + 2 H(+). In terms of biological role, quinone reductase that provides resistance to thiol-specific stress caused by electrophilic quinones. Functionally, also exhibits azoreductase activity. Catalyzes the reductive cleavage of the azo bond in aromatic azo compounds to the corresponding amines. The chain is FMN-dependent NADH:quinone oxidoreductase 2 from Bacillus licheniformis (strain ATCC 14580 / DSM 13 / JCM 2505 / CCUG 7422 / NBRC 12200 / NCIMB 9375 / NCTC 10341 / NRRL NRS-1264 / Gibson 46).